A 372-amino-acid polypeptide reads, in one-letter code: Innexin-16 (372 aa).

The next 4 membrane-spanning stretches (helical) occupy residues 31–51 (VVTTSILIAFSLLLFAKNYVG), 106–126 (VPFLLVIQALFFCVPRAFWII), 181–201 (LVMKLLILLNIVLQFFLLNSF), and 263–283 (IFIFLWFWFAFLLVATAGDFV). A glycan (N-linked (GlcNAc...) asparagine) is linked at Asn-352.

It belongs to the pannexin family.

The protein resides in the cell membrane. The protein localises to the cell junction. Its subcellular location is the gap junction. Functionally, structural component of the gap junctions. Required for signals downstream of defecation clock. In Caenorhabditis elegans, this protein is Innexin-16 (inx-16).